The sequence spans 177 residues: Ribosome maturation factor RimM (177 aa).

The region spanning 104 to 176 (DGEYYFFEIL…KIIVNMPEWL (73 aa)) is the PRC barrel domain.

It belongs to the RimM family. Binds ribosomal protein uS19.

It is found in the cytoplasm. An accessory protein needed during the final step in the assembly of 30S ribosomal subunit, possibly for assembly of the head region. Essential for efficient processing of 16S rRNA. May be needed both before and after RbfA during the maturation of 16S rRNA. It has affinity for free ribosomal 30S subunits but not for 70S ribosomes. The protein is Ribosome maturation factor RimM of Fervidobacterium nodosum (strain ATCC 35602 / DSM 5306 / Rt17-B1).